The following is a 305-amino-acid chain: Ribosomal RNA small subunit methyltransferase H (305 aa).

S-adenosyl-L-methionine contacts are provided by residues 30-32, aspartate 49, phenylalanine 74, aspartate 96, and glutamine 103; that span reads GGH.

It belongs to the methyltransferase superfamily. RsmH family.

The protein resides in the cytoplasm. It catalyses the reaction cytidine(1402) in 16S rRNA + S-adenosyl-L-methionine = N(4)-methylcytidine(1402) in 16S rRNA + S-adenosyl-L-homocysteine + H(+). Its function is as follows. Specifically methylates the N4 position of cytidine in position 1402 (C1402) of 16S rRNA. The protein is Ribosomal RNA small subunit methyltransferase H of Francisella tularensis subsp. novicida (strain U112).